A 397-amino-acid chain; its full sequence is Acetate kinase (397 aa).

N7 is a binding site for Mg(2+). Residue K14 participates in ATP binding. R91 provides a ligand contact to substrate. The active-site Proton donor/acceptor is the D148. ATP is bound by residues 208–212 (HLGNG), 283–285 (DFR), and 331–335 (GIGEN). Residue E384 coordinates Mg(2+).

It belongs to the acetokinase family. In terms of assembly, homodimer. Requires Mg(2+) as cofactor. Mn(2+) is required as a cofactor.

The protein localises to the cytoplasm. The catalysed reaction is acetate + ATP = acetyl phosphate + ADP. It participates in metabolic intermediate biosynthesis; acetyl-CoA biosynthesis; acetyl-CoA from acetate: step 1/2. Its function is as follows. Catalyzes the formation of acetyl phosphate from acetate and ATP. Can also catalyze the reverse reaction. In Treponema denticola (strain ATCC 35405 / DSM 14222 / CIP 103919 / JCM 8153 / KCTC 15104), this protein is Acetate kinase.